Here is a 673-residue protein sequence, read N- to C-terminus: Methionine--tRNA ligase (673 aa).

The 'HIGH' region signature appears at 13 to 23 (PYANGSIHLGH). Zn(2+)-binding residues include cysteine 144, cysteine 147, cysteine 157, and cysteine 160. The 'KMSKS' region signature appears at 330-334 (KMSKS). An ATP-binding site is contributed by lysine 333. Residues 572–673 (DFAQLDLRIA…GRARAGMTIS (102 aa)) form the tRNA-binding domain.

This sequence belongs to the class-I aminoacyl-tRNA synthetase family. MetG type 1 subfamily. As to quaternary structure, homodimer. Zn(2+) is required as a cofactor.

It localises to the cytoplasm. It catalyses the reaction tRNA(Met) + L-methionine + ATP = L-methionyl-tRNA(Met) + AMP + diphosphate. In terms of biological role, is required not only for elongation of protein synthesis but also for the initiation of all mRNA translation through initiator tRNA(fMet) aminoacylation. The protein is Methionine--tRNA ligase of Dichelobacter nodosus (strain VCS1703A).